Here is a 356-residue protein sequence, read N- to C-terminus: Guanine nucleotide-binding protein alpha-17 subunit (356 aa).

Gly-2 carries the N-myristoyl glycine lipid modification. A lipid anchor (S-palmitoyl cysteine) is attached at Cys-4. Residues 32-356 form the G-alpha domain; the sequence is SIVKLLLLGA…QKNLQKAGMM (325 aa). Residues 35 to 48 are G1 motif; that stretch reads KLLLLGAGECGKST. Residues 40–47, 177–183, 202–206, 271–274, and Ala-328 each bind GTP; these read GAGECGKS, LYSRVAT, DVGGQ, and NKKD. Positions 47 and 183 each coordinate Mg(2+). Positions 175 to 183 are G2 motif; that stretch reads DILYSRVAT. The segment at 198–207 is G3 motif; sequence FRVFDVGGQR. Positions 267–274 are G4 motif; sequence ILFMNKKD. The tract at residues 326-331 is G5 motif; the sequence is TCATDT.

The protein belongs to the G-alpha family. As to quaternary structure, g proteins are composed of 3 units; alpha, beta and gamma. The alpha chain contains the guanine nucleotide binding site.

Its subcellular location is the cell projection. It is found in the cilium. The protein resides in the dendrite. In terms of biological role, guanine nucleotide-binding proteins (G proteins) are involved as modulators or transducers in various transmembrane signaling systems. This specific G-alpha subunit plays an important role in olfaction and in cilia morphogenesis. Involved in chemotactic responses to attractants diacetyl, pyrazine, 2,4,5-trimethylthiazole, benzaldehyde, isoamyl alcohol, butanone and 2,3-pentanedione. Displays a redundant function with gpa-3 in chemotactic responses. Involved in avoidance responses to copper, sodium dodecyl sulfate and linoleic acid. Involved in osmotic avoidance and mechanosensory responses. Involved in specifying fan-like morphology of cilia of head sensory neurons AWC. The sequence is that of Guanine nucleotide-binding protein alpha-17 subunit (odr-3) from Caenorhabditis briggsae.